We begin with the raw amino-acid sequence, 261 residues long: DNA repair protein RecO (261 aa).

Belongs to the RecO family.

In terms of biological role, involved in DNA repair and RecF pathway recombination. This chain is DNA repair protein RecO, found in Limosilactobacillus reuteri (strain DSM 20016) (Lactobacillus reuteri).